Consider the following 293-residue polypeptide: uncharacterized protein (293 aa).

7 helical membrane passes run 55 to 75 (FLLC…VFLC), 77 to 97 (TGFM…LLHG), 110 to 130 (PGLL…ASAC), 138 to 158 (FSGL…GLAG), 164 to 184 (WQVI…ALYL), 193 to 213 (LFLG…VFDT), and 226 to 246 (LLTL…LILF). Asn-287 is a glycosylation site (N-linked (GlcNAc...) asparagine; by host).

Belongs to the cytomegalovirus US12 family.

It is found in the membrane. This is an uncharacterized protein from Human cytomegalovirus (strain AD169) (HHV-5).